Reading from the N-terminus, the 362-residue chain is Putative membrane-bound acyltransferase YfiQ (362 aa).

Helical transmembrane passes span Cys-11–Ala-31, Phe-44–Ala-64, Val-82–Met-102, Val-119–His-139, Trp-153–Ser-173, Gly-181–Ala-201, Trp-220–Gly-240, Ile-252–Phe-267, Tyr-283–Leu-303, and Ile-308–Thr-328.

Belongs to the acyltransferase 3 family.

Its subcellular location is the cell membrane. This Bacillus subtilis (strain 168) protein is Putative membrane-bound acyltransferase YfiQ (yfiQ).